The following is a 1033-amino-acid chain: NACHT, LRR and PYD domains-containing protein 11 (1033 aa).

The Pyrin domain maps to 1 to 91 (MAESDSTDFD…CRKIIGRRNR (91 aa)). Residues 147–470 (LNVFLMGERA…AFLMAVPNYL (324 aa)) enclose the NACHT domain. Residue 153–160 (GERASGKT) coordinates ATP. LRR repeat units follow at residues 588–611 (CCHLRTLKLSVQRIFQNKEPLIRP), 632–655 (MESLRELHIFDNDLNGISERILSK), 745–768 (GGSLRKLTLSSNPLRSDGMNILCD), 802–827 (SPTLRQLDLCVNRLKNYGVLHVTFPL), 859–882 (NEKLRSLEIGSNKIEDAGMQLLCG), and 919–944 (LERLNLLQNHLGNDGVAKLLESLISP).

It belongs to the NLRP family.

In terms of biological role, involved in inflammation. The chain is NACHT, LRR and PYD domains-containing protein 11 (NLRP11) from Homo sapiens (Human).